Reading from the N-terminus, the 221-residue chain is Small ribosomal subunit protein uS3 (221 aa).

Positions 39–107 (IREYIKRKLY…QVHVNIVEVK (69 aa)) constitute a KH type-2 domain.

Belongs to the universal ribosomal protein uS3 family. Part of the 30S ribosomal subunit. Forms a tight complex with proteins S10 and S14.

In terms of biological role, binds the lower part of the 30S subunit head. Binds mRNA in the 70S ribosome, positioning it for translation. This Desulforamulus reducens (strain ATCC BAA-1160 / DSM 100696 / MI-1) (Desulfotomaculum reducens) protein is Small ribosomal subunit protein uS3.